Here is a 262-residue protein sequence, read N- to C-terminus: Type III pantothenate kinase (262 aa).

6 to 13 serves as a coordination point for ATP; sequence DVGNTNAV. Substrate contacts are provided by residues Tyr100 and 107–110; that span reads GADR. Asp109 functions as the Proton acceptor in the catalytic mechanism. K(+) is bound at residue Asp129. Thr132 is an ATP binding site. Residue Thr184 coordinates substrate.

It belongs to the type III pantothenate kinase family. Homodimer. It depends on NH4(+) as a cofactor. The cofactor is K(+).

Its subcellular location is the cytoplasm. The catalysed reaction is (R)-pantothenate + ATP = (R)-4'-phosphopantothenate + ADP + H(+). It functions in the pathway cofactor biosynthesis; coenzyme A biosynthesis; CoA from (R)-pantothenate: step 1/5. In terms of biological role, catalyzes the phosphorylation of pantothenate (Pan), the first step in CoA biosynthesis. The sequence is that of Type III pantothenate kinase from Bacillus cereus (strain B4264).